Here is a 121-residue protein sequence, read N- to C-terminus: Ribosome-binding factor A (121 aa).

The protein belongs to the RbfA family. As to quaternary structure, monomer. Binds 30S ribosomal subunits, but not 50S ribosomal subunits or 70S ribosomes.

The protein localises to the cytoplasm. In terms of biological role, one of several proteins that assist in the late maturation steps of the functional core of the 30S ribosomal subunit. Associates with free 30S ribosomal subunits (but not with 30S subunits that are part of 70S ribosomes or polysomes). Required for efficient processing of 16S rRNA. May interact with the 5'-terminal helix region of 16S rRNA. This chain is Ribosome-binding factor A, found in Clostridium acetobutylicum (strain ATCC 824 / DSM 792 / JCM 1419 / IAM 19013 / LMG 5710 / NBRC 13948 / NRRL B-527 / VKM B-1787 / 2291 / W).